The following is a 374-amino-acid chain: uncharacterized protein (374 aa).

A divalent metal cation is bound by residues aspartate 158, histidine 160, aspartate 190, asparagine 221, histidine 312, and histidine 314.

This sequence belongs to the metallophosphoesterase superfamily. A divalent metal cation serves as cofactor.

This is an uncharacterized protein from Campylobacter jejuni subsp. jejuni serotype O:2 (strain ATCC 700819 / NCTC 11168).